A 122-amino-acid polypeptide reads, in one-letter code: Large ribosomal subunit protein uL14 (122 aa).

This sequence belongs to the universal ribosomal protein uL14 family. In terms of assembly, part of the 50S ribosomal subunit. Forms a cluster with proteins L3 and L19. In the 70S ribosome, L14 and L19 interact and together make contacts with the 16S rRNA in bridges B5 and B8.

Its function is as follows. Binds to 23S rRNA. Forms part of two intersubunit bridges in the 70S ribosome. The sequence is that of Large ribosomal subunit protein uL14 from Verminephrobacter eiseniae (strain EF01-2).